The sequence spans 294 residues: Proteasome subunit beta 1 (294 aa).

The propeptide at 1 to 65 is removed in mature form; by autocatalysis; the sequence is MTADRPALRT…MESGDLAPHG (65 aa). T66 (nucleophile) is an active-site residue.

It belongs to the peptidase T1B family. As to quaternary structure, the 20S proteasome core is composed of 14 alpha and 14 beta subunits that assemble into four stacked heptameric rings, resulting in a barrel-shaped structure. The two inner rings, each composed of seven catalytic beta subunits, are sandwiched by two outer rings, each composed of seven alpha subunits. All four combinations of alpha- and beta-subunits (beta2-alpha1, beta2-alpha2, beta1-alpha2 and beta1-alpha1) yield fully assembled and proteolytically active proteasomes. The catalytic chamber with the active sites is on the inside of the barrel. Has probably a gated structure, the ends of the cylinder being occluded by the N-termini of the alpha-subunits. Is likely capped by the proteasome-associated ATPase, ARC.

The protein resides in the cytoplasm. The catalysed reaction is Cleavage of peptide bonds with very broad specificity.. The protein operates within protein degradation; proteasomal Pup-dependent pathway. With respect to regulation, the formation of the proteasomal ATPase ARC-20S proteasome complex, likely via the docking of the C-termini of ARC into the intersubunit pockets in the alpha-rings, may trigger opening of the gate for substrate entry. Interconversion between the open-gate and close-gate conformations leads to a dynamic regulation of the 20S proteasome proteolysis activity. Functionally, component of the proteasome core, a large protease complex with broad specificity involved in protein degradation. The R.erythropolis proteasomes are able to cleave oligopeptides after Tyr, Phe and Leu, very poorly after Arg but not after Glu. Thus, displays chymotrypsin-like activity, low trypsin-like activity but no caspase-like activity. This Rhodococcus erythropolis (Arthrobacter picolinophilus) protein is Proteasome subunit beta 1.